The chain runs to 540 residues: Phosphoenolpyruvate carboxykinase (ATP) (540 aa).

Arg65 lines the substrate pocket. Lys87 is subject to N6-acetyllysine. Substrate-binding residues include Tyr207 and Lys213. ATP contacts are provided by residues Lys213, His232, and 248-256; that span reads GLSGTGKTT. Residues Lys213 and His232 each coordinate Mn(2+). A Mn(2+)-binding site is contributed by Asp269. Residues Glu297, Arg333, 449–450, and Thr455 each bind ATP; that span reads RI. Substrate is bound at residue Arg333. Lys523 carries the post-translational modification N6-acetyllysine.

Belongs to the phosphoenolpyruvate carboxykinase (ATP) family. Monomer. It depends on Mn(2+) as a cofactor.

The protein resides in the cytoplasm. It catalyses the reaction oxaloacetate + ATP = phosphoenolpyruvate + ADP + CO2. The protein operates within carbohydrate biosynthesis; gluconeogenesis. Its function is as follows. Involved in the gluconeogenesis. Catalyzes the conversion of oxaloacetate (OAA) to phosphoenolpyruvate (PEP) through direct phosphoryl transfer between the nucleoside triphosphate and OAA. This is Phosphoenolpyruvate carboxykinase (ATP) from Escherichia coli O6:K15:H31 (strain 536 / UPEC).